The sequence spans 225 residues: Glutathione S-transferase-like protein tpcF (225 aa).

The region spanning 4-85 (IQPITVYGKG…YLVSHYDPDH (82 aa)) is the GST N-terminal domain. The 134-residue stretch at 92–225 (GSNLAALATQ…KGMADIFPST (134 aa)) folds into the GST C-terminal domain.

It belongs to the GST superfamily. Specifically expressed in conidia.

Its pathway is secondary metabolite biosynthesis. Glutathione S-transferase-like protein; part of the gene cluster that mediates the biosynthesis of trypacidin, a mycotoxin with antiprotozoal activity and that plays a role in the infection process. The pathway begins with the synthesis of atrochrysone thioester by the polyketide synthase (PKS) tpcC. The atrochrysone carboxyl ACP thioesterase tpcB then breaks the thioester bond and releases the atrochrysone carboxylic acid from tpcC. The decarboxylase tpcK converts atrochrysone carboxylic acid to atrochrysone which is further reduced into emodin anthrone. The next step is performed by the emodin anthrone oxygenase tpcL that catalyzes the oxidation of emodinanthrone to emodin. Emodin O-methyltransferase encoded by tpcA catalyzes methylation of the 8-hydroxy group of emodin to form questin. Ring cleavage of questin by questin oxidase tpcI leads to desmethylsulochrin via several intermediates including questin epoxide. Another methylation step catalyzed by tpcM leads to the formation of sulochrin which is further converted to monomethylsulfochrin by tpcH. Finally, the tpcJ catalyzes the conversion of monomethylsulfochrin to trypacidin. Trypacidin is toxic for human pulmonary and bronchial epithelial cells by initiating the intracellular formation of nitric oxide (NO) and hydrogen peroxide (H(2)O(2)), thus triggering host necrotic cell death. The trypacidin pathway is also able to produce endocrocin via a distinct route from the endocrocin Enc pathway. This chain is Glutathione S-transferase-like protein tpcF, found in Aspergillus fumigatus (strain ATCC MYA-4609 / CBS 101355 / FGSC A1100 / Af293) (Neosartorya fumigata).